A 584-amino-acid polypeptide reads, in one-letter code: Protein BONZAI 3 (584 aa).

The disordered stretch occupies residues 1-23 (MGGCLSGDVKGGKQAIGGVQQRP). G2 carries N-myristoyl glycine lipidation. C2 domains follow at residues 34–167 (HNDA…TLTL) and 178–305 (NRNL…NFVY). D67, D73, D126, D128, and D145 together coordinate Ca(2+). The VWFA domain maps to 344 to 563 (NFMVAVDFTA…SVVQALLEEL (220 aa)).

The protein belongs to the copine family. In terms of assembly, interacts with BAP1 and BAP2. Ca(2+) serves as cofactor. In terms of tissue distribution, expressed at an extremely low level.

Its subcellular location is the cell membrane. Functionally, negative regulator of cell death and defense responses. Repress a number of R genes and may have effects in promoting growth and development. May function in membrane trafficking and in fusion of vesicles with plasma membrane. The protein is Protein BONZAI 3 (BON3) of Arabidopsis thaliana (Mouse-ear cress).